Consider the following 417-residue polypeptide: Gamma-glutamyl phosphate reductase (417 aa).

The protein belongs to the gamma-glutamyl phosphate reductase family.

It is found in the cytoplasm. It catalyses the reaction L-glutamate 5-semialdehyde + phosphate + NADP(+) = L-glutamyl 5-phosphate + NADPH + H(+). The protein operates within amino-acid biosynthesis; L-proline biosynthesis; L-glutamate 5-semialdehyde from L-glutamate: step 2/2. In terms of biological role, catalyzes the NADPH-dependent reduction of L-glutamate 5-phosphate into L-glutamate 5-semialdehyde and phosphate. The product spontaneously undergoes cyclization to form 1-pyrroline-5-carboxylate. This chain is Gamma-glutamyl phosphate reductase, found in Enterobacter sp. (strain 638).